Here is a 64-residue protein sequence, read N- to C-terminus: Large ribosomal subunit protein uL29 (64 aa).

It belongs to the universal ribosomal protein uL29 family.

This is Large ribosomal subunit protein uL29 from Maridesulfovibrio salexigens (strain ATCC 14822 / DSM 2638 / NCIMB 8403 / VKM B-1763) (Desulfovibrio salexigens).